The primary structure comprises 740 residues: Ion-translocating oxidoreductase complex subunit C (740 aa).

2 4Fe-4S ferredoxin-type domains span residues 369-397 (GEPQEEQSCIRCSACADACPADLLPQQLY) and 407-436 (KATTHNIADCIECGACAWVCPSNIPLVQYF). [4Fe-4S] cluster-binding residues include Cys-377, Cys-380, Cys-383, Cys-387, Cys-416, Cys-419, Cys-422, and Cys-426. The tract at residues 602 to 684 (KLEQQQANAE…EPEEQVDPRK (83 aa)) is disordered. Low complexity-rich tracts occupy residues 605–615 (QQQANAEPEQQ) and 637–647 (QQQANAEPEQQ).

It belongs to the 4Fe4S bacterial-type ferredoxin family. RnfC subfamily. In terms of assembly, the complex is composed of six subunits: RsxA, RsxB, RsxC, RsxD, RsxE and RsxG. [4Fe-4S] cluster serves as cofactor.

The protein resides in the cell inner membrane. In terms of biological role, part of a membrane-bound complex that couples electron transfer with translocation of ions across the membrane. Required to maintain the reduced state of SoxR. This chain is Ion-translocating oxidoreductase complex subunit C, found in Escherichia coli O7:K1 (strain IAI39 / ExPEC).